The sequence spans 197 residues: MAASPKINRREHILQCLATMLETSPGQRITTAKLAAEVGVSEAALYRHFPSKARMFEGLIDFIEESLLSRINLIMDEEKDTMRRCQLLLQLLLVFAERNPGISRVLNGDALLGENERLRNRTGQIFSKVETHLKQILREKTLREGKGFNLDEAILANLLLAVAEGRIAQFVRSDFKNKPTEHFAEQWQFIQQQLLQS.

The HTH tetR-type domain occupies 7–67 (INRREHILQC…GLIDFIEESL (61 aa)). Positions 30-49 (TTAKLAAEVGVSEAALYRHF) form a DNA-binding region, H-T-H motif.

It belongs to the nucleoid occlusion factor SlmA family. As to quaternary structure, homodimer. Interacts with FtsZ.

Its subcellular location is the cytoplasm. It is found in the nucleoid. Its function is as follows. Required for nucleoid occlusion (NO) phenomenon, which prevents Z-ring formation and cell division over the nucleoid. Acts as a DNA-associated cell division inhibitor that binds simultaneously chromosomal DNA and FtsZ, and disrupts the assembly of FtsZ polymers. SlmA-DNA-binding sequences (SBS) are dispersed on non-Ter regions of the chromosome, preventing FtsZ polymerization at these regions. The sequence is that of Nucleoid occlusion factor SlmA from Shewanella loihica (strain ATCC BAA-1088 / PV-4).